Here is a 221-residue protein sequence, read N- to C-terminus: Glutathione S-transferase U25 (221 aa).

An N-acetylalanine modification is found at Ala2. A GST N-terminal domain is found at 3-82 (DEVILLDFWP…YIDEVWPSKT (80 aa)). Residues 13-14 (SM), 39-40 (NK), 53-54 (KI), and 66-67 (ES) contribute to the glutathione site. The 121-residue stretch at 88-208 (DPYQRAQAKF…LPDSEKIIKF (121 aa)) folds into the GST C-terminal domain. The residue at position 149 (Thr149) is a Phosphothreonine.

The protein belongs to the GST superfamily. Tau family.

It localises to the cytoplasm. The protein localises to the cytosol. The catalysed reaction is RX + glutathione = an S-substituted glutathione + a halide anion + H(+). May be involved in the conjugation of reduced glutathione to a wide number of exogenous and endogenous hydrophobic electrophiles and have a detoxification role against certain herbicides. This is Glutathione S-transferase U25 (GSTU25) from Arabidopsis thaliana (Mouse-ear cress).